Consider the following 196-residue polypeptide: MAPMECVRRRNVGELVLRCAATLVCMLSLMLLVRDQQIAVQEVGVTSVTTQLRYSSSTGLVYLVYANGLVALYCFVVVLTSSFNGGSVMRRNKSGAWALFVLDQVLACILLSAASAASEIAFLVEKGAKKTIWDSKCIVYGHFCRMLEVSIATSFIAVIMLGSICVLSAKQLFQQYTHYARIVNMVKLKSTPNSLL.

At 1–11 (MAPMECVRRRN) the chain is on the cytoplasmic side. Residues 12–32 (VGELVLRCAATLVCMLSLMLL) traverse the membrane as a helical segment. Topologically, residues 33-58 (VRDQQIAVQEVGVTSVTTQLRYSSST) are extracellular. The helical transmembrane segment at 59-79 (GLVYLVYANGLVALYCFVVVL) threads the bilayer. The Cytoplasmic portion of the chain corresponds to 80–95 (TSSFNGGSVMRRNKSG). Residues 96–116 (AWALFVLDQVLACILLSAASA) form a helical membrane-spanning segment. Residues 117–148 (ASEIAFLVEKGAKKTIWDSKCIVYGHFCRMLE) lie on the Extracellular side of the membrane. The chain crosses the membrane as a helical span at residues 149 to 169 (VSIATSFIAVIMLGSICVLSA). The Cytoplasmic portion of the chain corresponds to 170–196 (KQLFQQYTHYARIVNMVKLKSTPNSLL).

It belongs to the Casparian strip membrane proteins (CASP) family. In terms of assembly, homodimer and heterodimers.

The protein localises to the cell membrane. This Pteridium aquilinum subsp. aquilinum (Bracken fern) protein is CASP-like protein 2U1.